The sequence spans 472 residues: Aspartyl/glutamyl-tRNA(Asn/Gln) amidotransferase subunit B (472 aa).

Belongs to the GatB/GatE family. GatB subfamily. In terms of assembly, heterotrimer of A, B and C subunits.

The catalysed reaction is L-glutamyl-tRNA(Gln) + L-glutamine + ATP + H2O = L-glutaminyl-tRNA(Gln) + L-glutamate + ADP + phosphate + H(+). It carries out the reaction L-aspartyl-tRNA(Asn) + L-glutamine + ATP + H2O = L-asparaginyl-tRNA(Asn) + L-glutamate + ADP + phosphate + 2 H(+). Its function is as follows. Allows the formation of correctly charged Asn-tRNA(Asn) or Gln-tRNA(Gln) through the transamidation of misacylated Asp-tRNA(Asn) or Glu-tRNA(Gln) in organisms which lack either or both of asparaginyl-tRNA or glutaminyl-tRNA synthetases. The reaction takes place in the presence of glutamine and ATP through an activated phospho-Asp-tRNA(Asn) or phospho-Glu-tRNA(Gln). The chain is Aspartyl/glutamyl-tRNA(Asn/Gln) amidotransferase subunit B from Campylobacter jejuni subsp. jejuni serotype O:6 (strain 81116 / NCTC 11828).